The sequence spans 1032 residues: Connector enhancer of kinase suppressor of ras 2 (1032 aa).

In terms of domain architecture, SAM spans 11–76; it reads WSPSQVVDWM…LEAVDLLCAL (66 aa). The residue at position 12 (Ser12) is a Phosphoserine. One can recognise a CRIC domain in the interval 84-178; sequence NLKTLSHKLN…TIVQQDCTVY (95 aa). The PDZ domain occupies 215-297; that stretch reads VIQLANIKPS…GVILTLKKRP (83 aa). Residues 302–515 enclose the DUF1170 domain; that stretch reads TSAPALLKNM…PAHYSLLPSL (214 aa). The segment covering 324 to 340 has biased composition (low complexity); sequence RSPTSSVATPSSTISTP. The tract at residues 324-349 is disordered; the sequence is RSPTSSVATPSSTISTPTKRDSSALQ. Residues Ser338 and Ser390 each carry the phosphoserine modification. Disordered stretches follow at residues 480–509 and 538–558; these read EEYM…PAHY and FQQS…ISGK. Positions 545-558 are enriched in basic residues; that stretch reads HKSKKKNKGAISGK. Residues 570–669 form the PH domain; that stretch reads RGDCEGWLWK…WLNRINMLTA (100 aa). Residues 682–766 form a disordered region; it reads DYWSESDKEE…PIRKTASQRR (85 aa). Phosphotyrosine is present on Tyr683. Over residues 683 to 693 the composition is skewed to acidic residues; it reads YWSESDKEEAD. A phosphoserine mark is found at Ser685 and Ser687. The segment covering 701–714 has biased composition (pro residues); it reads DSPPPPYDTYPRPP. A compositionally biased stretch (low complexity) spans 730–740; sequence LSSTETSQSQS. Residues Ser756 and Ser767 each carry the phosphoserine modification. Residues 864-900 form a disordered region; sequence ACDPQDDIQPPEVEEEEEEEEEEAAGENVGEKNENRE. Positions 874–917 form a coiled coil; sequence PEVEEEEEEEEEEAAGENVGEKNENREEKLGDSLQDLYRALEEA. Residues 875-888 show a composition bias toward acidic residues; that stretch reads EVEEEEEEEEEEAA. Position 906 is a phosphoserine (Ser906).

It belongs to the CNKSR family. Interacts with RAF1, RAB2L and RAL GTPase proteins. Phosphorylated on tyrosine.

It localises to the cytoplasm. The protein localises to the membrane. In terms of biological role, may function as an adapter protein or regulator of Ras signaling pathways. This Mus musculus (Mouse) protein is Connector enhancer of kinase suppressor of ras 2 (Cnksr2).